We begin with the raw amino-acid sequence, 326 residues long: Transcription factor WRKY45-1 (326 aa).

Disordered regions lie at residues 67 to 114 (GGEG…SVVV) and 252 to 288 (GVGS…FGPD). Positions 112–180 (VVVKNLDDGQ…YIGEHTCRDP (69 aa)) form a DNA-binding region, WRKY. Positions 273–283 (RGGGGGGGVAG) are enriched in gly residues.

The protein belongs to the WRKY group III family. In terms of tissue distribution, expressed in aleurone cells.

Its subcellular location is the nucleus. In terms of biological role, transcriptional activator involved in defense responses against pathogens. Acts as a positive regulator of defense responses against the rice blast fungus Magnaporthe oryzae. Acts through W-boxes, which are cis-elements that are enriched in the promoters of several defense-related genes. Plays an important role in the benzothiadiazole-induced disease resistance by mediating salicylic acid (SA) defense signaling pathway, independently of the disease resistance gene NPR1/NH1. Acts as a negative regulator of defense responses against the bacterial blight Xanthomonas oryzae pv oryzae (Xoo) and the bacterial streak Xanthomonas oryzae pv oryzicola (Xoc). Acts downstream of abscisic acid (ABA) signaling in response to the rice blast fungus. ABA is a negative regulator of defense responses that interacts antagonistically with salicylic acid (SA) signaling pathway. Acts as a negative regulator of ABA signaling that suppresses growth of seedlings. Does not seem to be involved in the regulation of salt stress response. Acts as a negative regulator of cold stress response. Acts as a negative regulator of drought stress response. This Oryza sativa subsp. japonica (Rice) protein is Transcription factor WRKY45-1.